Here is a 445-residue protein sequence, read N- to C-terminus: UDP-N-acetylmuramate--L-alanine ligase (445 aa).

ATP is bound at residue 113-119 (GSHGKTS).

This sequence belongs to the MurCDEF family.

Its subcellular location is the cytoplasm. It carries out the reaction UDP-N-acetyl-alpha-D-muramate + L-alanine + ATP = UDP-N-acetyl-alpha-D-muramoyl-L-alanine + ADP + phosphate + H(+). It participates in cell wall biogenesis; peptidoglycan biosynthesis. In terms of biological role, cell wall formation. This is UDP-N-acetylmuramate--L-alanine ligase from Enterococcus faecalis (strain ATCC 700802 / V583).